The sequence spans 95 residues: Aspartyl/glutamyl-tRNA(Asn/Gln) amidotransferase subunit C (95 aa).

Belongs to the GatC family. In terms of assembly, heterotrimer of A, B and C subunits.

It catalyses the reaction L-glutamyl-tRNA(Gln) + L-glutamine + ATP + H2O = L-glutaminyl-tRNA(Gln) + L-glutamate + ADP + phosphate + H(+). The catalysed reaction is L-aspartyl-tRNA(Asn) + L-glutamine + ATP + H2O = L-asparaginyl-tRNA(Asn) + L-glutamate + ADP + phosphate + 2 H(+). Its function is as follows. Allows the formation of correctly charged Asn-tRNA(Asn) or Gln-tRNA(Gln) through the transamidation of misacylated Asp-tRNA(Asn) or Glu-tRNA(Gln) in organisms which lack either or both of asparaginyl-tRNA or glutaminyl-tRNA synthetases. The reaction takes place in the presence of glutamine and ATP through an activated phospho-Asp-tRNA(Asn) or phospho-Glu-tRNA(Gln). The protein is Aspartyl/glutamyl-tRNA(Asn/Gln) amidotransferase subunit C of Laribacter hongkongensis (strain HLHK9).